A 197-amino-acid polypeptide reads, in one-letter code: ATP-dependent Clp protease proteolytic subunit (197 aa).

The active-site Nucleophile is the serine 98. Residue histidine 123 is part of the active site.

It belongs to the peptidase S14 family. In terms of assembly, fourteen ClpP subunits assemble into 2 heptameric rings which stack back to back to give a disk-like structure with a central cavity, resembling the structure of eukaryotic proteasomes.

The protein resides in the cytoplasm. The catalysed reaction is Hydrolysis of proteins to small peptides in the presence of ATP and magnesium. alpha-casein is the usual test substrate. In the absence of ATP, only oligopeptides shorter than five residues are hydrolyzed (such as succinyl-Leu-Tyr-|-NHMec, and Leu-Tyr-Leu-|-Tyr-Trp, in which cleavage of the -Tyr-|-Leu- and -Tyr-|-Trp bonds also occurs).. Functionally, cleaves peptides in various proteins in a process that requires ATP hydrolysis. Has a chymotrypsin-like activity. Plays a major role in the degradation of misfolded proteins. This chain is ATP-dependent Clp protease proteolytic subunit, found in Pediococcus pentosaceus (strain ATCC 25745 / CCUG 21536 / LMG 10740 / 183-1w).